A 314-amino-acid polypeptide reads, in one-letter code: tRNA(Ile)-lysidine synthase, chloroplastic (314 aa).

Position 31–36 (31–36 (SGGQDS)) interacts with ATP.

The protein belongs to the tRNA(Ile)-lysidine synthase family.

The protein resides in the plastid. Its subcellular location is the chloroplast. It carries out the reaction cytidine(34) in tRNA(Ile2) + L-lysine + ATP = lysidine(34) in tRNA(Ile2) + AMP + diphosphate + H(+). Functionally, ligates lysine onto the cytidine present at position 34 of the AUA codon-specific tRNA(Ile) that contains the anticodon CAU, in an ATP-dependent manner. Cytidine is converted to lysidine, thus changing the amino acid specificity of the tRNA from methionine to isoleucine. This chain is tRNA(Ile)-lysidine synthase, chloroplastic, found in Cyanidium caldarium (Red alga).